Here is a 326-residue protein sequence, read N- to C-terminus: Cathepsin L-like proteinase (326 aa).

The signal sequence occupies residues Met1–Gly15. A propeptide spans Ser16–Arg106 (activation peptide). Pro109 is subject to 3-hydroxyproline; partial. 3 cysteine pairs are disulfide-bonded: Cys129–Cys172, Cys163–Cys204, and Cys262–Cys311. Cys132 is a catalytic residue. The residue at position 196 (Pro196) is a 3-hydroxyproline; partial. Catalysis depends on residues His269 and Asn289.

This sequence belongs to the peptidase C1 family. In terms of assembly, monomer. Post-translationally, contains cysteine residues involved in intramolecular disulfide bonding.

The protein resides in the secreted. Strongly inhibited by Antipain, E64 and Leupeptin, and weakly inhibited by iodoacetic acid (IAA) and phenylmethylsulfonyl fluoride (PMSF). Requires the presence of dithiothreitol (DTT) for activity. In terms of biological role, thiol protease. Probably involved in interaction with host tissues. Displays a similar activity to that of papain. Has high activity on Z-Phe-Arg-NHMec, but no activity on Z-Arg-NHMec. This is Cathepsin L-like proteinase from Fasciola hepatica (Liver fluke).